The chain runs to 265 residues: Ribosomal RNA small subunit methyltransferase A (265 aa).

Residues asparagine 13, leucine 15, glycine 39, glutamate 59, aspartate 87, and asparagine 108 each contribute to the S-adenosyl-L-methionine site.

Belongs to the class I-like SAM-binding methyltransferase superfamily. rRNA adenine N(6)-methyltransferase family. RsmA subfamily.

It is found in the cytoplasm. The catalysed reaction is adenosine(1518)/adenosine(1519) in 16S rRNA + 4 S-adenosyl-L-methionine = N(6)-dimethyladenosine(1518)/N(6)-dimethyladenosine(1519) in 16S rRNA + 4 S-adenosyl-L-homocysteine + 4 H(+). In terms of biological role, specifically dimethylates two adjacent adenosines (A1518 and A1519) in the loop of a conserved hairpin near the 3'-end of 16S rRNA in the 30S particle. May play a critical role in biogenesis of 30S subunits. The chain is Ribosomal RNA small subunit methyltransferase A from Aliarcobacter butzleri (strain RM4018) (Arcobacter butzleri).